The sequence spans 67 residues: Large ribosomal subunit protein uL29 (67 aa).

Belongs to the universal ribosomal protein uL29 family.

In Methanosarcina mazei (strain ATCC BAA-159 / DSM 3647 / Goe1 / Go1 / JCM 11833 / OCM 88) (Methanosarcina frisia), this protein is Large ribosomal subunit protein uL29.